Here is a 231-residue protein sequence, read N- to C-terminus: Orotidine 5'-phosphate decarboxylase (231 aa).

Residues D11, K33, 60 to 69 (DLKFHDIPNT), T119, R180, Q189, G209, and R210 contribute to the substrate site. K62 serves as the catalytic Proton donor.

Belongs to the OMP decarboxylase family. Type 1 subfamily. Homodimer.

The catalysed reaction is orotidine 5'-phosphate + H(+) = UMP + CO2. It functions in the pathway pyrimidine metabolism; UMP biosynthesis via de novo pathway; UMP from orotate: step 2/2. In terms of biological role, catalyzes the decarboxylation of orotidine 5'-monophosphate (OMP) to uridine 5'-monophosphate (UMP). The sequence is that of Orotidine 5'-phosphate decarboxylase from Idiomarina loihiensis (strain ATCC BAA-735 / DSM 15497 / L2-TR).